The primary structure comprises 130 residues: Cytochrome b-c1 complex subunit 7 (130 aa).

This sequence belongs to the UQCRB/QCR7 family. In terms of assembly, component of the ubiquinol-cytochrome c oxidoreductase (cytochrome b-c1 complex, complex III, CIII), a multisubunit enzyme composed of 3 respiratory subunits cytochrome b, cytochrome c1 and Rieske protein, 2 core protein subunits, and additional low-molecular weight protein subunits. The complex exists as an obligatory dimer and forms supercomplexes (SCs) in the inner mitochondrial membrane with cytochrome c oxidase (complex IV, CIV).

The protein resides in the mitochondrion inner membrane. In terms of biological role, component of the ubiquinol-cytochrome c oxidoreductase, a multisubunit transmembrane complex that is part of the mitochondrial electron transport chain which drives oxidative phosphorylation. The respiratory chain contains 3 multisubunit complexes succinate dehydrogenase (complex II, CII), ubiquinol-cytochrome c oxidoreductase (cytochrome b-c1 complex, complex III, CIII) and cytochrome c oxidase (complex IV, CIV), that cooperate to transfer electrons derived from NADH and succinate to molecular oxygen, creating an electrochemical gradient over the inner membrane that drives transmembrane transport and the ATP synthase. The cytochrome b-c1 complex catalyzes electron transfer from ubiquinol to cytochrome c, linking this redox reaction to translocation of protons across the mitochondrial inner membrane, with protons being carried across the membrane as hydrogens on the quinol. In the process called Q cycle, 2 protons are consumed from the matrix, 4 protons are released into the intermembrane space and 2 electrons are passed to cytochrome c. This is Cytochrome b-c1 complex subunit 7 (UBCRBP) from Echinococcus multilocularis (Fox tapeworm).